The primary structure comprises 144 residues: Transcription antitermination protein NusB (144 aa).

It belongs to the NusB family.

Functionally, involved in transcription antitermination. Required for transcription of ribosomal RNA (rRNA) genes. Binds specifically to the boxA antiterminator sequence of the ribosomal RNA (rrn) operons. The polypeptide is Transcription antitermination protein NusB (Pasteurella multocida (strain Pm70)).